The sequence spans 253 residues: Triosephosphate isomerase (253 aa).

A substrate-binding site is contributed by 8–10 (NWK). The active-site Electrophile is histidine 93. Residue glutamate 165 is the Proton acceptor of the active site. Residues glycine 171, serine 210, and 231-232 (GG) contribute to the substrate site.

The protein belongs to the triosephosphate isomerase family. Homodimer.

It localises to the cytoplasm. It catalyses the reaction D-glyceraldehyde 3-phosphate = dihydroxyacetone phosphate. It participates in carbohydrate biosynthesis; gluconeogenesis. It functions in the pathway carbohydrate degradation; glycolysis; D-glyceraldehyde 3-phosphate from glycerone phosphate: step 1/1. Its function is as follows. Involved in the gluconeogenesis. Catalyzes stereospecifically the conversion of dihydroxyacetone phosphate (DHAP) to D-glyceraldehyde-3-phosphate (G3P). The sequence is that of Triosephosphate isomerase from Francisella tularensis subsp. mediasiatica (strain FSC147).